The primary structure comprises 333 residues: Tumor necrosis factor receptor superfamily member 6 (333 aa).

The first 25 residues, 1-25 (MLGIWTLLPLVLTSVVRLLSKCVNA), serve as a signal peptide directing secretion. Over 26-173 (QVTDISSKGF…KCKEEDSRSD (148 aa)) the chain is Extracellular. TNFR-Cys repeat units follow at residues 47 to 83 (QNLEGLHHEGQFCRNPCPPGERKARDCTVNEDEPDCV), 84 to 127 (PCQE…NTKC), and 128 to 166 (RCKPNFFCNSAVCEHCDPCTKCKHGIIEECTLTSNTKCK). Disulfide bonds link Cys59-Cys73, Cys63-Cys82, Cys85-Cys101, Cys104-Cys119, Cys107-Cys127, Cys129-Cys143, Cys146-Cys157, and Cys149-Cys165. The N-linked (GlcNAc...) asparagine glycan is linked to Asn118. A helical membrane pass occupies residues 174–194 (LLWLCLLLLLLLIPPIVYVVI). Over 195 to 333 (KEPCRKRRKE…NFGNEVQNLV (139 aa)) the chain is Cytoplasmic. Cys198 carries the S-palmitoyl cysteine lipid modification. Residues 211–315 (STTLNPETAI…EKIHAVILKD (105 aa)) form an interaction with HIPK3 region. Phosphothreonine is present on Thr213. Phosphoserine is present on Ser223. The interval 228–252 (SKYITTIAGAMTLSQVKDFVRKNGV) is interaction with CALM. The 85-residue stretch at 228 to 312 (SKYITTIAGA…TLAEKIHAVI (85 aa)) folds into the Death domain. The residue at position 320 (Thr320) is a Phosphothreonine.

In terms of assembly, component of the death-induced signaling complex (DISC) composed of cell surface receptor FAS/CD95, adapter protein FADD and the CASP8 protease; recruitment of CASP8 to the complex is required for processing of CASP8 into the p18 and p10 subunits. Interacts directly (via DED domain) with NOL3 (via CARD domain); inhibits death-inducing signaling complex (DISC) assembly by inhibiting the increase in FAS-FADD binding induced by FAS activation. Binds DAXX. Interacts with HIPK3. Part of a complex containing HIPK3 and FADD. Binds RIPK1 and FAIM2. Interacts with BABAM2 and FEM1B. Interacts with CALM. In the absence of stimulation, interacts with BIRC2, DDX3X and GSK3B. The interaction with BIRC2 and DDX3X is further enhanced upon receptor stimulation and accompanied by DDX3X and BIRC2 cleavage. In terms of processing, palmitoylated. Palmitoylation by ZDHHC7 prevents the lysosomal degradation of FAS regulating its expression at the plasma membrane.

It is found in the cell membrane. Its subcellular location is the membrane raft. Functionally, receptor for TNFSF6/FASLG. The adapter molecule FADD recruits caspase CASP8 to the activated receptor. The resulting death-inducing signaling complex (DISC) performs CASP8 proteolytic activation which initiates the subsequent cascade of caspases (aspartate-specific cysteine proteases) mediating apoptosis. FAS-mediated apoptosis may have a role in the induction of peripheral tolerance, in the antigen-stimulated suicide of mature T-cells, or both. This Macaca mulatta (Rhesus macaque) protein is Tumor necrosis factor receptor superfamily member 6 (FAS).